Here is a 32-residue protein sequence, read N- to C-terminus: Delta-conotoxin-like MVID (32 aa).

3 disulfide bridges follow: cysteine 3–cysteine 18, cysteine 10–cysteine 22, and cysteine 17–cysteine 27. Proline 14 bears the 4-hydroxyproline mark.

It belongs to the conotoxin O1 superfamily. Expressed by the venom duct.

It localises to the secreted. In terms of biological role, delta-conotoxins bind to site 6 of voltage-gated sodium channels (Nav) and inhibit the inactivation process. This chain is Delta-conotoxin-like MVID, found in Conus magus (Magical cone).